The following is a 389-amino-acid chain: Chalcone synthase (389 aa).

Catalysis depends on residues cysteine 164, histidine 303, and asparagine 336.

This sequence belongs to the thiolase-like superfamily. Chalcone/stilbene synthases family. As to quaternary structure, homodimer. Mainly expressed in flowers, to a lower extent in young leaves, and barely in mature leaves and twigs.

The enzyme catalyses (E)-4-coumaroyl-CoA + 3 malonyl-CoA + 3 H(+) = 2',4,4',6'-tetrahydroxychalcone + 3 CO2 + 4 CoA. The protein operates within secondary metabolite biosynthesis; flavonoid biosynthesis. The primary product of this enzyme is 4,2',4',6'-tetrahydroxychalcone (also termed naringenin-chalcone or chalcone) which can under specific conditions spontaneously isomerize into naringenin. The sequence is that of Chalcone synthase from Rhododendron dauricum (Azalea daurica).